Reading from the N-terminus, the 456-residue chain is Bifunctional protein GlmU (456 aa).

The tract at residues 1 to 229 (MLNNAMSVVI…LSEVEGVNNR (229 aa)) is pyrophosphorylase. UDP-N-acetyl-alpha-D-glucosamine is bound by residues 11–14 (LAAG), Lys25, Gln76, 81–82 (GT), 103–105 (YGD), Gly140, Glu154, Asn169, and Asn227. Asp105 is a binding site for Mg(2+). Asn227 is a binding site for Mg(2+). The segment at 230–250 (LQLSRLERVYQSEQAEKLLLA) is linker. Residues 251-456 (GVMLRDPARF…EGWRRPVKKK (206 aa)) are N-acetyltransferase. UDP-N-acetyl-alpha-D-glucosamine-binding residues include Arg333 and Lys351. The Proton acceptor role is filled by His363. Positions 366 and 377 each coordinate UDP-N-acetyl-alpha-D-glucosamine. Acetyl-CoA is bound by residues Ala380, 386 to 387 (NY), Ser405, Ala423, and Arg440.

In the N-terminal section; belongs to the N-acetylglucosamine-1-phosphate uridyltransferase family. The protein in the C-terminal section; belongs to the transferase hexapeptide repeat family. In terms of assembly, homotrimer. The cofactor is Mg(2+).

The protein resides in the cytoplasm. The enzyme catalyses alpha-D-glucosamine 1-phosphate + acetyl-CoA = N-acetyl-alpha-D-glucosamine 1-phosphate + CoA + H(+). It carries out the reaction N-acetyl-alpha-D-glucosamine 1-phosphate + UTP + H(+) = UDP-N-acetyl-alpha-D-glucosamine + diphosphate. Its pathway is nucleotide-sugar biosynthesis; UDP-N-acetyl-alpha-D-glucosamine biosynthesis; N-acetyl-alpha-D-glucosamine 1-phosphate from alpha-D-glucosamine 6-phosphate (route II): step 2/2. It functions in the pathway nucleotide-sugar biosynthesis; UDP-N-acetyl-alpha-D-glucosamine biosynthesis; UDP-N-acetyl-alpha-D-glucosamine from N-acetyl-alpha-D-glucosamine 1-phosphate: step 1/1. It participates in bacterial outer membrane biogenesis; LPS lipid A biosynthesis. In terms of biological role, catalyzes the last two sequential reactions in the de novo biosynthetic pathway for UDP-N-acetylglucosamine (UDP-GlcNAc). The C-terminal domain catalyzes the transfer of acetyl group from acetyl coenzyme A to glucosamine-1-phosphate (GlcN-1-P) to produce N-acetylglucosamine-1-phosphate (GlcNAc-1-P), which is converted into UDP-GlcNAc by the transfer of uridine 5-monophosphate (from uridine 5-triphosphate), a reaction catalyzed by the N-terminal domain. The polypeptide is Bifunctional protein GlmU (Escherichia coli O139:H28 (strain E24377A / ETEC)).